Reading from the N-terminus, the 88-residue chain is Small ribosomal subunit protein uS15 (88 aa).

This sequence belongs to the universal ribosomal protein uS15 family. Part of the 30S ribosomal subunit. Forms a bridge to the 50S subunit in the 70S ribosome, contacting the 23S rRNA.

In terms of biological role, one of the primary rRNA binding proteins, it binds directly to 16S rRNA where it helps nucleate assembly of the platform of the 30S subunit by binding and bridging several RNA helices of the 16S rRNA. Forms an intersubunit bridge (bridge B4) with the 23S rRNA of the 50S subunit in the ribosome. The sequence is that of Small ribosomal subunit protein uS15 from Geotalea uraniireducens (strain Rf4) (Geobacter uraniireducens).